A 682-amino-acid chain; its full sequence is Potassium-transporting ATPase ATP-binding subunit (682 aa).

4 helical membrane-spanning segments follow: residues Pro34–Val54, Ile58–Phe78, Ile219–Leu239, and Val254–Ile274. The active-site 4-aspartylphosphate intermediate is the Asp307. ATP is bound by residues Asp344, Glu348, Phe377 to Ser384, and Lys395. Mg(2+) is bound by residues Asp518 and Asp522. A run of 3 helical transmembrane segments spans residues Phe588–Met608, Ala616–Leu636, and Leu662–Ala682.

Belongs to the cation transport ATPase (P-type) (TC 3.A.3) family. Type IA subfamily. As to quaternary structure, the system is composed of three essential subunits: KdpA, KdpB and KdpC.

The protein resides in the cell inner membrane. The catalysed reaction is K(+)(out) + ATP + H2O = K(+)(in) + ADP + phosphate + H(+). In terms of biological role, part of the high-affinity ATP-driven potassium transport (or Kdp) system, which catalyzes the hydrolysis of ATP coupled with the electrogenic transport of potassium into the cytoplasm. This subunit is responsible for energy coupling to the transport system and for the release of the potassium ions to the cytoplasm. This Salmonella typhimurium (strain LT2 / SGSC1412 / ATCC 700720) protein is Potassium-transporting ATPase ATP-binding subunit.